A 102-amino-acid chain; its full sequence is Small ribosomal subunit protein uS10 (102 aa).

It belongs to the universal ribosomal protein uS10 family. Part of the 30S ribosomal subunit.

In terms of biological role, involved in the binding of tRNA to the ribosomes. The protein is Small ribosomal subunit protein uS10 of Syntrophotalea carbinolica (strain DSM 2380 / NBRC 103641 / GraBd1) (Pelobacter carbinolicus).